The sequence spans 233 residues: uncharacterized protein (233 aa).

The segment covering 1–10 (MSSKLSKKKL) has biased composition (basic residues). The tract at residues 1–90 (MSSKLSKKKL…KRQKGKNNDR (90 aa)) is disordered. Positions 11–56 (KSLEYRSKKFDKKSQSLEEHEKKVQQKNEELEKKAADKISRDELPE) are enriched in basic and acidic residues. Over residues 76–85 (KTLKSKRQKG) the composition is skewed to basic residues. The RRM domain occupies 92 to 171 (VILFVGNLPK…RKINIELTAG (80 aa)). Basic and acidic residues-rich tracts occupy residues 194–216 (MRQRVASEEQQAGEEKMARKAVA) and 224–233 (IHPDRLRLLQ). Positions 194–233 (MRQRVASEEQQAGEEKMARKAVADEGLESGIHPDRLRLLQ) are disordered.

Its subcellular location is the nucleus. It localises to the nucleolus. This is an uncharacterized protein from Schizosaccharomyces pombe (strain 972 / ATCC 24843) (Fission yeast).